Consider the following 511-residue polypeptide: Glucans biosynthesis protein G (511 aa).

An N-terminal signal peptide occupies residues 1 to 22 (MMKMRWLSAAVMLTLYTSSSWA).

It belongs to the OpgD/OpgG family.

The protein resides in the periplasm. The protein operates within glycan metabolism; osmoregulated periplasmic glucan (OPG) biosynthesis. Its function is as follows. Involved in the biosynthesis of osmoregulated periplasmic glucans (OPGs). The polypeptide is Glucans biosynthesis protein G (Escherichia coli (strain K12 / MC4100 / BW2952)).